The primary structure comprises 268 residues: Glucosamine-6-phosphate deaminase (268 aa).

D72 (proton acceptor; for enolization step) is an active-site residue. The For ring-opening step role is filled by D141. The Proton acceptor; for ring-opening step role is filled by H143. E148 acts as the For ring-opening step in catalysis.

This sequence belongs to the glucosamine/galactosamine-6-phosphate isomerase family. NagB subfamily. As to quaternary structure, homohexamer.

It catalyses the reaction alpha-D-glucosamine 6-phosphate + H2O = beta-D-fructose 6-phosphate + NH4(+). It functions in the pathway amino-sugar metabolism; N-acetylneuraminate degradation; D-fructose 6-phosphate from N-acetylneuraminate: step 5/5. Its activity is regulated as follows. Allosterically activated by N-acetylglucosamine 6-phosphate (GlcNAc6P). Its function is as follows. Catalyzes the reversible isomerization-deamination of glucosamine 6-phosphate (GlcN6P) to form fructose 6-phosphate (Fru6P) and ammonium ion. This chain is Glucosamine-6-phosphate deaminase, found in Histophilus somni (strain 129Pt) (Haemophilus somnus).